Reading from the N-terminus, the 135-residue chain is Early nodulin-5 (135 aa).

The N-terminal stretch at Met-1–Ser-23 is a signal peptide.

In terms of tissue distribution, invasion zone and early symbiotic zone.

In terms of biological role, involved in the infection process during the plant-rhizobium interaction. This is Early nodulin-5 (ENOD5) from Pisum sativum (Garden pea).